Here is a 371-residue protein sequence, read N- to C-terminus: Beta-1,3-galactosyltransferase 4 (371 aa).

The Cytoplasmic portion of the chain corresponds to 1–4; the sequence is MPLS. The helical; Signal-anchor for type II membrane protein transmembrane segment at 5–25 threads the bilayer; the sequence is LFRRLLLAVLLLVIIWTLFGP. Residues 26–371 are Lumenal-facing; sequence SGLGEELLSL…RCRFIAWLNS (346 aa). A glycan (N-linked (GlcNAc...) asparagine) is linked at Asn-143. Residues 187–208 are disordered; sequence GGPSEQWQKGKEPQEETTAVHK. Over residues 194–207 the composition is skewed to basic and acidic residues; sequence QKGKEPQEETTAVH.

Belongs to the glycosyltransferase 31 family. In terms of tissue distribution, highly expressed in thymus, spleen, kidney and testis and, to a lesser extent, in brain and liver.

The protein resides in the golgi apparatus membrane. It carries out the reaction a ganglioside GM2 (d18:1(4E)) + UDP-alpha-D-galactose = a ganglioside GM1 (d18:1(4E)) + UDP + H(+). The catalysed reaction is a ganglioside GM2 + UDP-alpha-D-galactose = a ganglioside GM1 + UDP + H(+). The enzyme catalyses a ganglioside GD2 (d18:1(4E)) + UDP-alpha-D-galactose = a ganglioside GD1b (d18:1(4E)) + UDP + H(+). It catalyses the reaction a ganglioside GA2 (d18:1(4E)) + UDP-alpha-D-galactose = a ganglioside GA1 (d18:1(4E)) + UDP + H(+). Its pathway is protein modification; protein glycosylation. Functionally, involved in GM1/GD1B/GA1 ganglioside biosynthesis. The sequence is that of Beta-1,3-galactosyltransferase 4 (B3galt4) from Rattus norvegicus (Rat).